The sequence spans 287 residues: Gliotoxin thiomethyltransferase GtmA (287 aa).

S-adenosyl-L-methionine-binding residues include T27 and A54. A disulfide bond links C55 and C80. S-adenosyl-L-methionine-binding residues include D82, M87, N109, A110, A126, and R248.

It belongs to the class I-like SAM-binding methyltransferase superfamily.

The protein localises to the cytoplasm. It catalyses the reaction a thiol + S-adenosyl-L-methionine = a methyl thioether + S-adenosyl-L-homocysteine + H(+). In terms of biological role, S-methyltransferase that catalyzes the irreversible conversion of the secondary metabolite gliotoxin to bis(methylthio)gliotoxin (BmGT). Gliotoxin, a member of the epipolythiodioxopiperazine (ETP) class of toxins, is characterized by a disulfide bridged cyclic dipeptide. Its thiol groups are essential for bioactivity, as they conjugate to sulfur-containing proteins, disturb the intracellular redox equilibrium, and generate reactive oxygen species by cycling between reduced and oxidized states. The enzyme prevents self-intoxication of the fungus by irreversible conversion of the toxic gliotoxin to a biologically inactive bis-thiomethylated derivative. Appears to negatively regulate gliotoxin biosynthesis. This is Gliotoxin thiomethyltransferase GtmA from Aspergillus fumigatus (strain ATCC MYA-4609 / CBS 101355 / FGSC A1100 / Af293) (Neosartorya fumigata).